The following is a 79-amino-acid chain: Acyl carrier protein (79 aa).

The Carrier domain maps to 2–77; it reads SSIEDRVKKI…QAVDYIKKHL (76 aa). Ser37 is subject to O-(pantetheine 4'-phosphoryl)serine.

Belongs to the acyl carrier protein (ACP) family. In terms of processing, 4'-phosphopantetheine is transferred from CoA to a specific serine of apo-ACP by AcpS. This modification is essential for activity because fatty acids are bound in thioester linkage to the sulfhydryl of the prosthetic group.

It localises to the cytoplasm. Its pathway is lipid metabolism; fatty acid biosynthesis. In terms of biological role, carrier of the growing fatty acid chain in fatty acid biosynthesis. The sequence is that of Acyl carrier protein from Halorhodospira halophila (strain DSM 244 / SL1) (Ectothiorhodospira halophila (strain DSM 244 / SL1)).